Consider the following 307-residue polypeptide: MPINVPDGLPAAEILTKEDVFIMEEKRAEHQDIRPLSIVILNLMPNKIITETQILRLLGNSPLQVDITLLYPETHRSKNTPEEYLIKYYQTFDSIKDQKFDGMIITGAPIEQMPFEEVDFWPELQKIMDWSKANVFSTLFICWGAQAGLYHFFGVPKYPLPAKMFGVFPHTLNRRDIRLLRGFDDIFYVPHSRHTEVRKEDIVKVPELEILSESEESGVYLVGTKGGRQIFVTGHSEYDPYTLKAEYDRDISYELPINIPQNYYPGDDPRQTPVVRWRGHSNLLFANWLNYYVYQETPYNLEELGNR.

C142 (acyl-thioester intermediate) is an active-site residue. Residues K163 and S192 each contribute to the substrate site. The active-site Proton acceptor is H235. E237 is an active-site residue. R249 is a binding site for substrate.

The protein belongs to the MetA family.

The protein resides in the cytoplasm. It catalyses the reaction L-homoserine + acetyl-CoA = O-acetyl-L-homoserine + CoA. It functions in the pathway amino-acid biosynthesis; L-methionine biosynthesis via de novo pathway; O-acetyl-L-homoserine from L-homoserine: step 1/1. In terms of biological role, transfers an acetyl group from acetyl-CoA to L-homoserine, forming acetyl-L-homoserine. The protein is Homoserine O-acetyltransferase of Desulfitobacterium hafniense (strain Y51).